The chain runs to 198 residues: Superoxide dismutase [Mn], mitochondrial (198 aa).

H26 contributes to the Mn(2+) binding site. 3'-nitrotyrosine is present on Y34. An N6-acetyllysine; alternate mark is found at K44 and K51. An N6-succinyllysine; alternate mark is found at K44 and K51. H74 provides a ligand contact to Mn(2+). K90 carries the post-translational modification N6-acetyllysine. K98 and K106 each carry N6-acetyllysine; alternate. N6-succinyllysine; alternate is present on residues K98 and K106. Mn(2+) contacts are provided by D159 and H163. K178 is modified (N6-acetyllysine).

Belongs to the iron/manganese superoxide dismutase family. As to quaternary structure, homotetramer. Mn(2+) serves as cofactor. Nitrated under oxidative stress. Nitration coupled with oxidation inhibits the catalytic activity. In terms of processing, acetylation at Lys-98 decreases enzymatic activity. Deacetylated by SIRT3 upon exposure to ionizing radiations or after long fasting. Post-translationally, polyubiquitinated; leading to proteasomal degradation. Deubiquitinated by USP36 which increases protein stability.

It is found in the mitochondrion matrix. It catalyses the reaction 2 superoxide + 2 H(+) = H2O2 + O2. Functionally, destroys superoxide anion radicals which are normally produced within the cells and which are toxic to biological systems. This Hylobates lar (Lar gibbon) protein is Superoxide dismutase [Mn], mitochondrial (SOD2).